A 396-amino-acid chain; its full sequence is Elongation factor Tu (396 aa).

The 197-residue stretch at 10 to 206 (KPHVNVGTIG…ALDSYIPTPE (197 aa)) folds into the tr-type G domain. Residues 19–26 (GHVDHGKT) form a G1 region. 19 to 26 (GHVDHGKT) contacts GTP. Thr-26 contributes to the Mg(2+) binding site. The G2 stretch occupies residues 60-64 (GITIN). Positions 81 to 84 (DCPG) are G3. GTP is bound by residues 81 to 85 (DCPGH) and 136 to 139 (NKCD). Residues 136–139 (NKCD) are G4. Residues 174-176 (SAK) are G5.

The protein belongs to the TRAFAC class translation factor GTPase superfamily. Classic translation factor GTPase family. EF-Tu/EF-1A subfamily. As to quaternary structure, monomer.

Its subcellular location is the cytoplasm. The enzyme catalyses GTP + H2O = GDP + phosphate + H(+). In terms of biological role, GTP hydrolase that promotes the GTP-dependent binding of aminoacyl-tRNA to the A-site of ribosomes during protein biosynthesis. This chain is Elongation factor Tu, found in Ralstonia nicotianae (strain ATCC BAA-1114 / GMI1000) (Ralstonia solanacearum).